We begin with the raw amino-acid sequence, 169 residues long: Small ribosomal subunit protein uS5 (169 aa).

Residues 15 to 79 form the S5 DRBM domain; it reads LKEQVVAINR…EAAKKNLRRI (65 aa).

Belongs to the universal ribosomal protein uS5 family. Part of the 30S ribosomal subunit. Contacts proteins S4 and S8.

Its function is as follows. With S4 and S12 plays an important role in translational accuracy. In terms of biological role, located at the back of the 30S subunit body where it stabilizes the conformation of the head with respect to the body. The polypeptide is Small ribosomal subunit protein uS5 (Solibacter usitatus (strain Ellin6076)).